A 229-amino-acid chain; its full sequence is N-acetyltransferase MPR1 (229 aa).

In terms of domain architecture, N-acetyltransferase spans 65–219 (FNLEIESGKT…DAIIYGKDLT (155 aa)). Substrate is bound at residue Asn-135. 145-150 (RGQKVG) contacts CoA. Residue 172-173 (NL) coordinates substrate.

Belongs to the acetyltransferase family. In terms of assembly, homodimer. In terms of processing, not glycosylated.

It is found in the cytoplasm. The protein resides in the mitochondrion. It catalyses the reaction L-glutamate 5-semialdehyde + acetyl-CoA = N-acetyl-L-glutamate 5-semialdehyde + CoA + H(+). In terms of biological role, N-acetyltransferase involved in oxidative stress resistance. Acetylates the toxic proline metabolism intermediate (S)-1-pyrroline-5-carboxylate (P5C), or more likely its spontaneously forming tautomer glutamate-5-semialdehyde (GSA) into N-acetyl-GSA for arginine synthesis in the mitochondria. P5C has been shown to increase the levels of reactive oxygen species (ROS) in the cell by inhibiting the function of the respiratory chain in the mitochondria. The enzyme is able to reduce intracellular ROS levels under P5C-induced oxidative stress and protects cells from damage by oxidative stress. Also acetylates and thereby detoxifies the proline analog azetidine-2-carboxylate (AZC), however it is unlikely that AZC is a natural substrate as it occurs only in plants belonging to the Lilaceae family. Does not acetylate proline. In Saccharomyces cerevisiae (Baker's yeast), this protein is N-acetyltransferase MPR1.